Here is a 224-residue protein sequence, read N- to C-terminus: tRNA (guanine-N(7)-)-methyltransferase (224 aa).

S-adenosyl-L-methionine is bound by residues Glu-54, Glu-79, and Asp-129. Asp-129 is an active-site residue. Substrate is bound by residues Lys-133 and Asp-165.

This sequence belongs to the class I-like SAM-binding methyltransferase superfamily. TrmB family.

It catalyses the reaction guanosine(46) in tRNA + S-adenosyl-L-methionine = N(7)-methylguanosine(46) in tRNA + S-adenosyl-L-homocysteine. Its pathway is tRNA modification; N(7)-methylguanine-tRNA biosynthesis. Catalyzes the formation of N(7)-methylguanine at position 46 (m7G46) in tRNA. In Chlamydia pneumoniae (Chlamydophila pneumoniae), this protein is tRNA (guanine-N(7)-)-methyltransferase.